Here is a 434-residue protein sequence, read N- to C-terminus: 23S rRNA (uracil(1939)-C(5))-methyltransferase RlmD (434 aa).

The 59-residue stretch at 10–68 folds into the TRAM domain; sequence RVTTRQIITVTVNDLDPFGQGVARHQGKALFVSGVLPQEQAEVVLVEDKKQYARAQVKR. 4 residues coordinate [4Fe-4S] cluster: cysteine 81, cysteine 87, cysteine 90, and cysteine 162. S-adenosyl-L-methionine contacts are provided by glutamine 265, phenylalanine 294, asparagine 299, glutamate 315, asparagine 342, and aspartate 363. Cysteine 389 acts as the Nucleophile in catalysis.

It belongs to the class I-like SAM-binding methyltransferase superfamily. RNA M5U methyltransferase family. RlmD subfamily.

The catalysed reaction is uridine(1939) in 23S rRNA + S-adenosyl-L-methionine = 5-methyluridine(1939) in 23S rRNA + S-adenosyl-L-homocysteine + H(+). Functionally, catalyzes the formation of 5-methyl-uridine at position 1939 (m5U1939) in 23S rRNA. In Klebsiella pneumoniae (strain 342), this protein is 23S rRNA (uracil(1939)-C(5))-methyltransferase RlmD.